Here is a 539-residue protein sequence, read N- to C-terminus: 4-coumarate--CoA ligase 5 (539 aa).

Residues S185, S186, G187, T188, T189, and K193 each contribute to the ATP site. (E)-4-coumaroyl-AMP is bound by residues Y235 and S239. Residue R256 coordinates CoA. Residues 258–327 (DTVKMLQLVE…AKLPNAVLGQ (70 aa)) form an SBD1 region. Residues A305, Q327, G328, T332, and M340 each contribute to the (E)-4-coumaroyl-AMP site. Positions 327, 328, and 332 each coordinate ATP. The tract at residues 328–395 (GYGMTEAGPV…IRGKQIMKGY (68 aa)) is SBD2. D416 and R431 together coordinate ATP. 2 residues coordinate (E)-4-coumaroyl-AMP: K433 and K437. 2 residues coordinate CoA: K439 and G440. Residue K522 coordinates ATP.

Belongs to the ATP-dependent AMP-binding enzyme family. Requires Mg(2+) as cofactor. As to expression, expressed in roots, stems, leaf blades, leaf sheaths and spikelets.

It carries out the reaction (E)-ferulate + ATP + CoA = (E)-feruloyl-CoA + AMP + diphosphate. The catalysed reaction is (E)-4-coumarate + ATP + CoA = (E)-4-coumaroyl-CoA + AMP + diphosphate. It catalyses the reaction (E)-sinapate + ATP + CoA = (E)-sinapoyl-CoA + AMP + diphosphate. The enzyme catalyses (E)-caffeate + ATP + CoA = (E)-caffeoyl-CoA + AMP + diphosphate. It carries out the reaction (E)-cinnamate + ATP + CoA = (E)-cinnamoyl-CoA + AMP + diphosphate. The catalysed reaction is (E)-ferulate + ATP + H(+) = (E)-feruloyl-AMP + diphosphate. It catalyses the reaction (E)-feruloyl-AMP + CoA = (E)-feruloyl-CoA + AMP + H(+). The enzyme catalyses (E)-4-coumarate + ATP + H(+) = (E)-4-coumaroyl-AMP + diphosphate. It carries out the reaction (E)-4-coumaroyl-AMP + CoA = (E)-4-coumaroyl-CoA + AMP + H(+). The catalysed reaction is (E)-sinapate + ATP + H(+) = (E)-sinapoyl-AMP + diphosphate. It catalyses the reaction (E)-sinapoyl-AMP + CoA = (E)-sinapoyl-CoA + AMP + H(+). The enzyme catalyses (E)-caffeate + ATP + H(+) = (E)-caffeoyl-AMP + diphosphate. It carries out the reaction (E)-caffeoyl-AMP + CoA = (E)-caffeoyl-CoA + AMP + H(+). The protein operates within phytoalexin biosynthesis; 3,4',5-trihydroxystilbene biosynthesis; 3,4',5-trihydroxystilbene from trans-4-coumarate: step 1/2. Involved in the phenylpropanoid metabolism by mediating the activation of a number of hydroxycinnamates for the biosynthesis of monolignols and other phenolic secondary metabolites. Catalyzes the formation of CoA esters of cinnamate, 4-coumarate, caffeate and ferulate. Is also able to convert sinapate to its corresponding CoA ester, a reaction that is rarely observed in 4CL catalysis. Is more efficient with substrates in the following order: ferulate &gt; 4-coumarate &gt; sinapate &gt; caffeate &gt; cinnamate. Follows a two-step reaction mechanism, wherein the carboxylate substrate first undergoes adenylation by ATP, followed by a thioesterification in the presence of CoA to yield the final CoA thioesters. The polypeptide is 4-coumarate--CoA ligase 5 (Oryza sativa subsp. japonica (Rice)).